Reading from the N-terminus, the 312-residue chain is Lipoyl synthase (312 aa).

The segment covering 1-10 (MNEAPAEKQK) has biased composition (basic and acidic residues). Residues 1-20 (MNEAPAEKQKPQQGKRFSER) form a disordered region. [4Fe-4S] cluster contacts are provided by Cys51, Cys56, Cys62, Cys77, Cys81, Cys84, and Ser290. The Radical SAM core domain maps to 63 to 280 (WSRKTATYLA…RSVGESLGLF (218 aa)).

The protein belongs to the radical SAM superfamily. Lipoyl synthase family. [4Fe-4S] cluster is required as a cofactor.

It localises to the cytoplasm. It catalyses the reaction [[Fe-S] cluster scaffold protein carrying a second [4Fe-4S](2+) cluster] + N(6)-octanoyl-L-lysyl-[protein] + 2 oxidized [2Fe-2S]-[ferredoxin] + 2 S-adenosyl-L-methionine + 4 H(+) = [[Fe-S] cluster scaffold protein] + N(6)-[(R)-dihydrolipoyl]-L-lysyl-[protein] + 4 Fe(3+) + 2 hydrogen sulfide + 2 5'-deoxyadenosine + 2 L-methionine + 2 reduced [2Fe-2S]-[ferredoxin]. It participates in protein modification; protein lipoylation via endogenous pathway; protein N(6)-(lipoyl)lysine from octanoyl-[acyl-carrier-protein]: step 2/2. Its function is as follows. Catalyzes the radical-mediated insertion of two sulfur atoms into the C-6 and C-8 positions of the octanoyl moiety bound to the lipoyl domains of lipoate-dependent enzymes, thereby converting the octanoylated domains into lipoylated derivatives. The sequence is that of Lipoyl synthase from Chlamydia felis (strain Fe/C-56) (Chlamydophila felis).